We begin with the raw amino-acid sequence, 221 residues long: NEDD4 family-interacting protein 1 (221 aa).

An N-acetylalanine modification is found at Ala-2. The interval 2–41 (ALALAALAAVEPACGSRYQQLQNEEESGEPEQAAGDAPPP) is interaction with UBE2L3. Residues 2–116 (ALALAALAAV…ADQLRIGNDG (115 aa)) lie on the Cytoplasmic side of the membrane. The segment at 18–45 (RYQQLQNEEESGEPEQAAGDAPPPYSSI) is disordered. Short sequence motifs (PPxY motif) lie at residues 39–42 (PPPY), 64–67 (PPSY), and 74–76 (PSY). Residues 42 to 76 (YSSISAESAAYFDYKDESGFPKPPSYNVATTLPSY) are interaction with ITCH. Residues 117–137 (IFMLTFFMAFLFNWIGFFLSF) traverse the membrane as a helical segment. Residues 138 to 143 (CLTTSA) lie on the Extracellular side of the membrane. A helical transmembrane segment spans residues 144–164 (AGRYGAISGFGLSLIKWILIV). Topologically, residues 165–172 (RFSTYFPG) are cytoplasmic. Residues 173–193 (YFDGQYWLWWVFLVLGFLLFL) form a helical membrane-spanning segment. Residues 194–221 (RGFINYAKVRKMPETFSNLPRTRVLFIY) are Extracellular-facing.

As to quaternary structure, forms heterodimers with NDFIP2. Interacts with several E3 ubiquitin-protein ligases, including ITCH, NEDD4, NEDD4L and WWP2. The interaction with NEDD4, NEDD4L and ITCH leads to relocalization of these proteins to exosomes and eventually to exosomal secretion. Interacts with U2SURP. Interacts with SLC11A2/DMT1. Interacts with PTEN. May interact with phosphorylated EGFR. Interacts with BRAT1. Interacts with KCNH2. Interacts with MAVS. Part of a complex containing ITCH, NDFIP1 and MAP3K7. Interacts (via N-terminus) with UBE2L3; the interaction mediates recruitment of UBE2L3 to ITCH. Post-translationally, ubiquitinated by NEDD4 and ITCH; mono-, di- and polyubiquitinated forms are detected. Ubiquitination regulates its degradation. In terms of processing, undergoes transient tyrosine phosphorylation following EGF stimulation, most probably by catalyzed by SRC. Phosphorylation SRC is enhanced in the presence of NDFIP2 which may act as a scaffold to recruit SRC to NDFIP1. Widely expressed. Higher levels are detected in cerebellum, pituitary, thalamus, kidney, liver, testis, salivary glands and placenta. Also expressed in fetal brain, kidney and lung.

It is found in the endosome membrane. It localises to the golgi apparatus membrane. Its subcellular location is the synapse. The protein localises to the synaptosome. The protein resides in the cell projection. It is found in the dendrite. It localises to the secreted. Activates HECT domain-containing E3 ubiquitin-protein ligases, including NEDD4 and ITCH, and consequently modulates the stability of their targets. As a result, controls many cellular processes. Prevents chronic T-helper cell-mediated inflammation by activating ITCH and thus controlling JUNB degradation. Promotes pancreatic beta cell death through degradation of JUNB and inhibition of the unfolded protein response, leading to reduction of insulin secretion. Restricts the production of pro-inflammatory cytokines in effector Th17 T-cells by promoting ITCH-mediated ubiquitination and degradation of RORC. Together with NDFIP2, limits the cytokine signaling and expansion of effector Th2 T-cells by promoting degradation of JAK1, probably by ITCH- and NEDD4L-mediated ubiquitination. Regulates peripheral T-cell tolerance to self and foreign antigens, forcing the exit of naive CD4+ T-cells from the cell cycle before they become effector T-cells. Negatively regulates RLR-mediated antiviral response by promoting SMURF1-mediated ubiquitination and subsequent degradation of MAVS. Negatively regulates KCNH2 potassium channel activity by decreasing its cell-surface expression and interfering with channel maturation through recruitment of NEDD4L to the Golgi apparatus where it mediates KCNH2 degradation. In cortical neurons, mediates the ubiquitination of the divalent metal transporter SLC11A2/DMT1 by NEDD4L, leading to its down-regulation and protection of the cells from cobalt and iron toxicity. Important for normal development of dendrites and dendritic spines in cortex. Enhances the ubiquitination of BRAT1 mediated by: NEDD4, NEDD4L and ITCH and is required for the nuclear localization of ubiquitinated BRAT1. Enhances the ITCH-mediated ubiquitination of MAP3K7 by recruiting E2 ubiquitin-conjugating enzyme UBE2L3 to ITCH. Modulates EGFR signaling through multiple pathways. In particular, may regulate the ratio of AKT1-to-MAPK8 signaling in response to EGF, acting on AKT1 probably through PTEN destabilization and on MAPK8 through ITCH-dependent MAP2K4 inactivation. As a result, may control cell growth rate. Inhibits cell proliferation by promoting PTEN nuclear localization and changing its signaling specificity. The polypeptide is NEDD4 family-interacting protein 1 (NDFIP1) (Homo sapiens (Human)).